The following is a 356-amino-acid chain: Probable protein phosphatase 2C T23F11.1 (356 aa).

A PPM-type phosphatase domain is found at 23–286 (LVGSSCMQGW…DNMTVVLVGL (264 aa)). Residues aspartate 59, glycine 60, aspartate 228, and aspartate 277 each coordinate Mn(2+). Residues 336 to 356 (NAANQEEEEDDNEPAPANFQV) form a disordered region.

It belongs to the PP2C family. Requires Mg(2+) as cofactor. It depends on Mn(2+) as a cofactor.

It catalyses the reaction O-phospho-L-seryl-[protein] + H2O = L-seryl-[protein] + phosphate. The enzyme catalyses O-phospho-L-threonyl-[protein] + H2O = L-threonyl-[protein] + phosphate. In Caenorhabditis elegans, this protein is Probable protein phosphatase 2C T23F11.1 (ppm-2).